A 75-amino-acid polypeptide reads, in one-letter code: Small ribosomal subunit protein bS18 (75 aa).

The residue at position 2 (Ala2) is an N-acetylalanine.

It belongs to the bacterial ribosomal protein bS18 family. As to quaternary structure, part of the 30S ribosomal subunit. Forms a tight heterodimer with protein bS6.

Its function is as follows. Binds as a heterodimer with protein bS6 to the central domain of the 16S rRNA, where it helps stabilize the platform of the 30S subunit. The polypeptide is Small ribosomal subunit protein bS18 (rpsR) (Salmonella typhimurium (strain LT2 / SGSC1412 / ATCC 700720)).